We begin with the raw amino-acid sequence, 647 residues long: MPDPATYRPATGSIPVEPGVYRFRDPYGRVIYVGKAKSLRSRLASYFADVANLHPRTRQMVTIAAKVEWTVVNTEVEALQLEYNWIKEFDPRFNIRYRDDKSYPVLAVTLGEEFPRLMVYRGPRRKGVRYFGPYSHAWAIRETLDLLTRVFPARTCSPGVFKRHKQIDRPCLLGYIDKCAAPCVGRVGAEQHSQIVADFCDFLSGKTDRYARDLERKMSAAAEQLDFERAARLRDDLFALKRAMEKQAVVFGDGTDADVVAFAYDELEVAVQVFHVRGGRVRGQRGWIVEKSDDPGDTGEEQLVEQFLAQFYGEQAELDFVADESANPVPREVLVPCLPSNADELASWLSGLRGSRVALRVPRRGDKRALAETVQRNAKEELQQHKLKRASDFNSRSAALQNIQDTLGLSYAPLRIECVDISHVQGTDVVGSLVVFEDGLPRKSDYRHFGIRKAAGNGRSDDVASIAEVTRRRFLQHLHDQNDTNLLSPEGKSHRFAYPPNLYVVDGGAPQVNAASTVLEELGIIDVAVIGLAKRLEEVWVPFEPYPVIMPRNSEALFLLQRVRDEAHRFAITYHRSKRSKRMTASALDSVPGLGAHRRKALVTHFGSIARLKDATVEQITAVPGIGVATATAVLEALRPDSSEASE.

Positions 16–95 (VEPGVYRFRD…IKEFDPRFNI (80 aa)) constitute a GIY-YIG domain. The UVR domain maps to 208–243 (DRYARDLERKMSAAAEQLDFERAARLRDDLFALKRA).

The protein belongs to the UvrC family. As to quaternary structure, interacts with UvrB in an incision complex.

It localises to the cytoplasm. Its function is as follows. The UvrABC repair system catalyzes the recognition and processing of DNA lesions. UvrC both incises the 5' and 3' sides of the lesion. The N-terminal half is responsible for the 3' incision and the C-terminal half is responsible for the 5' incision. In Mycobacterium leprae (strain Br4923), this protein is UvrABC system protein C.